We begin with the raw amino-acid sequence, 148 residues long: 18 kDa antigen (148 aa).

The 111-residue stretch at 21 to 131 folds into the sHSP domain; it reads TSARPAVMPM…KPRKISVDRG (111 aa).

It belongs to the small heat shock protein (HSP20) family.

In terms of biological role, not known. This protein is one of the major immune reactive proteins in mycobacteria. The protein is 18 kDa antigen (hsp18) of Mycobacterium leprae (strain TN).